Here is a 268-residue protein sequence, read N- to C-terminus: MAKVPDLFEDLKNCYSENEDYSSEIDHLSLNQKSFYDASYEPLREDQMNKFMSLDTSETSKTSKLSFKENVVMVAASGKILKKRRLSLNQFITDDDLEAIANNTEEEIIKPRSAHYSFQSNVKYNFMRVIHQECILNDALNQSIIRDMSGPYLTATTLNNLEEAVKFDMVAYVSEEDSQLPVTLRISKTQLFVSAQNEDEPVLLKEMPETPKIIKDETNLLFFWEKHGSMDYFKSVAHPKLFIATKQEKLVHMASGPPSITDFQILEK.

The propeptide occupies 1-112; sequence MAKVPDLFED…NTEEEIIKPR (112 aa). The residue at position 82 (Lys-82) is an N6-acetyllysine. The nuclear localization signal (NLS) stretch occupies residues 82–86; that stretch reads KKRRL. Residue Ser-87 is modified to Phosphoserine. N-linked (GlcNAc...) asparagine glycosylation is found at Asn-102 and Asn-141.

The protein belongs to the IL-1 family. In terms of assembly, monomer. Interacts with TMED10; the interaction mediates the translocation from the cytoplasm into the ERGIC (endoplasmic reticulum-Golgi intermediate compartment) and thereby secretion. Interacts with IL1R1. Interacts with S100A13; this interaction is the first step in the export of IL1A, followed by direct translocation of this complex across the plasma membrane. Post-translationally, acetylated within its nuclear localization sequence, which impacts subcellular localization. Proteolytic processed by CAPN1 in a calcium-dependent manner. Cleavage from 31 kDa precursor to 18 kDa biologically active molecules. In terms of processing, phosphorylated. Phosphorylation greatly enhances susceptibility to digestion and promotes the conversion of pre-IL1A alpha to the biologically active IL1A.

The protein localises to the nucleus. The protein resides in the cytoplasm. It is found in the secreted. Its function is as follows. Cytokine constitutively present intracellularly in nearly all resting non-hematopoietic cells that plays an important role in inflammation and bridges the innate and adaptive immune systems. After binding to its receptor IL1R1 together with its accessory protein IL1RAP, forms the high affinity interleukin-1 receptor complex. Signaling involves the recruitment of adapter molecules such as MYD88, IRAK1 or IRAK4. In turn, mediates the activation of NF-kappa-B and the three MAPK pathways p38, p42/p44 and JNK pathways. Within the cell, acts as an alarmin and cell death results in its liberation in the extracellular space after disruption of the cell membrane to induce inflammation and alert the host to injury or damage. In addition to its role as a danger signal, which occurs when the cytokine is passively released by cell necrosis, directly senses DNA damage and acts as signal for genotoxic stress without loss of cell integrity. The sequence is that of Interleukin-1 alpha (IL1A) from Bos taurus (Bovine).